Here is a 526-residue protein sequence, read N- to C-terminus: Cytochrome P450 monooxygenase SAT11 (526 aa).

The helical transmembrane segment at 18-38 threads the bilayer; it reads AFLLIAMLYLGYLLCICFYNI. Asparagine 125 and asparagine 447 each carry an N-linked (GlcNAc...) asparagine glycan. Cysteine 455 lines the heme pocket. Asparagine 520 carries N-linked (GlcNAc...) asparagine glycosylation.

This sequence belongs to the cytochrome P450 family. Heme serves as cofactor.

It localises to the membrane. Its pathway is mycotoxin biosynthesis. Functionally, cytochrome P450 monooxygenase; part of the satratoxin SC2 cluster involved in the biosynthesis of satratoxins, trichothecene mycotoxins that are associated with human food poisonings. Satratoxins are suggested to be made by products of multiple gene clusters (SC1, SC2 and SC3) that encode 21 proteins in all, including polyketide synthases, acetyltransferases, and other enzymes expected to modify the trichothecene skeleton. SC1 encodes 10 proteins, SAT1 to SAT10. The largest are SAT8, which encodes a putative polyketide synthase (PKS) with a conventional non-reducing architecture, and SAT10, a putative protein containing four ankyrin repeats and thus may be involved in protein scaffolding. The putative short-chain reductase SAT3 may assist the PKS in some capacity. SAT6 contains a secretory lipase domain and acts probably as a trichothecene esterase. SAT5 encodes a putative acetyltransferase, and so, with SAT6, may affect endogenous protection from toxicity. The probable transcription factor SAT9 may regulate the expression of the SC1 cluster. SC2 encodes proteins SAT11 to SAT16, the largest of which encodes the putative reducing PKS SAT13. SAT11 is a cytochrome P450 monooxygenase, while SAT14 and SAT16 are probable acetyltransferases. The SC2 cluster may be regulated by the transcription factor SAT15. SC3 is a small cluster that encodes 5 proteins, SAT17 to SAT21. SAT21 is a putative MFS-type transporter which may have a role in exporting secondary metabolites. The four other proteins putatively encoded in SC3 include the taurine hydroxylase-like protein SAT17, the O-methyltransferase SAT18, the acetyltransferase SAT19, and the Cys6-type zinc finger SAT20, the latter being probably involved in regulation of SC3 expression. The protein is Cytochrome P450 monooxygenase SAT11 of Stachybotrys chartarum (strain CBS 109288 / IBT 7711) (Toxic black mold).